Consider the following 155-residue polypeptide: 6,7-dimethyl-8-ribityllumazine synthase (155 aa).

Residues Phe-23, 57–59, and 81–83 contribute to the 5-amino-6-(D-ribitylamino)uracil site; these read AFE and AVI. (2S)-2-hydroxy-3-oxobutyl phosphate is bound at residue 86–87; it reads ST. The active-site Proton donor is His-89. 5-amino-6-(D-ribitylamino)uracil is bound at residue Phe-114. Position 128 (Arg-128) interacts with (2S)-2-hydroxy-3-oxobutyl phosphate.

It belongs to the DMRL synthase family.

The catalysed reaction is (2S)-2-hydroxy-3-oxobutyl phosphate + 5-amino-6-(D-ribitylamino)uracil = 6,7-dimethyl-8-(1-D-ribityl)lumazine + phosphate + 2 H2O + H(+). The protein operates within cofactor biosynthesis; riboflavin biosynthesis; riboflavin from 2-hydroxy-3-oxobutyl phosphate and 5-amino-6-(D-ribitylamino)uracil: step 1/2. Its function is as follows. Catalyzes the formation of 6,7-dimethyl-8-ribityllumazine by condensation of 5-amino-6-(D-ribitylamino)uracil with 3,4-dihydroxy-2-butanone 4-phosphate. This is the penultimate step in the biosynthesis of riboflavin. The protein is 6,7-dimethyl-8-ribityllumazine synthase of Geobacter metallireducens (strain ATCC 53774 / DSM 7210 / GS-15).